The sequence spans 261 residues: Imidazole glycerol phosphate synthase subunit HisF (261 aa).

Residues Asp12 and Asp131 contribute to the active site.

The protein belongs to the HisA/HisF family. As to quaternary structure, heterodimer of HisH and HisF.

The protein resides in the cytoplasm. The catalysed reaction is 5-[(5-phospho-1-deoxy-D-ribulos-1-ylimino)methylamino]-1-(5-phospho-beta-D-ribosyl)imidazole-4-carboxamide + L-glutamine = D-erythro-1-(imidazol-4-yl)glycerol 3-phosphate + 5-amino-1-(5-phospho-beta-D-ribosyl)imidazole-4-carboxamide + L-glutamate + H(+). Its pathway is amino-acid biosynthesis; L-histidine biosynthesis; L-histidine from 5-phospho-alpha-D-ribose 1-diphosphate: step 5/9. Its function is as follows. IGPS catalyzes the conversion of PRFAR and glutamine to IGP, AICAR and glutamate. The HisF subunit catalyzes the cyclization activity that produces IGP and AICAR from PRFAR using the ammonia provided by the HisH subunit. The protein is Imidazole glycerol phosphate synthase subunit HisF of Brucella melitensis biotype 2 (strain ATCC 23457).